Here is a 207-residue protein sequence, read N- to C-terminus: Early nodulin-like protein 11 (207 aa).

A signal peptide spans 1–24 (MVSLISIVSVVFLLFTTFYHFGEA). A Phytocyanin domain is found at 25–130 (RIINVGGSLD…GEKVTVVVQS (106 aa)). The N-linked (GlcNAc...) asparagine glycan is linked to Asn-43. Residues Cys-83 and Cys-118 are joined by a disulfide bond. The interval 129 to 179 (QSPNHPKPGPAAVTPTLPPKPSTTPAAPAPAPPTPSPKSSTSTMAPAPAPA) is disordered. Positions 144 to 164 (TLPPKPSTTPAAPAPAPPTPS) are enriched in pro residues. The span at 165 to 179 (PKSSTSTMAPAPAPA) shows a compositional bias: low complexity. Residue Ser-181 is the site of GPI-anchor amidated serine attachment. Positions 182–207 (SAVGLVAGNGIFWASTLVAVIGLAFA) are cleaved as a propeptide — removed in mature form.

The protein belongs to the early nodulin-like (ENODL) family. As to expression, confined to flowers and siliques.

It localises to the cell membrane. Functionally, may act as a carbohydrate transporter. Required, together with ENODL11, ENODL12, ENODL13, ENODL14 and ENODL15, for male-female communication and pollen tube reception and burst at the synergid cell surface of the female gametophyte. The chain is Early nodulin-like protein 11 from Arabidopsis thaliana (Mouse-ear cress).